Consider the following 225-residue polypeptide: Reticulon-like protein B9 (225 aa).

One can recognise a Reticulon domain in the interval 39 to 224 (VADILLWREP…PRGTVKNKKF (186 aa)). Helical transmembrane passes span 50–70 (IAATLVIGVSILWFLMEVVEY), 72–92 (FITLICHASMTSMLFFFIWST), and 152–172 (YIVSIIGTYFNFVNLLFIGFV).

It localises to the endoplasmic reticulum membrane. This is Reticulon-like protein B9 (RTNLB9) from Arabidopsis thaliana (Mouse-ear cress).